Consider the following 1485-residue polypeptide: Chromosome partition protein MukB (1485 aa).

Glycine 34 to serine 41 lines the ATP pocket. 6 coiled-coil regions span residues leucine 337–glutamine 480, glutamine 509–leucine 605, arginine 780–serine 805, glutamate 835–histidine 915, glycine 977–glycine 1116, and glutamate 1210–isoleucine 1235. A flexible hinge region spans residues proline 666–arginine 783.

It belongs to the SMC family. MukB subfamily. As to quaternary structure, homodimerization via its hinge domain. Binds to DNA via its C-terminal region. Interacts, and probably forms a ternary complex, with MukE and MukF via its C-terminal region. The complex formation is stimulated by calcium or magnesium. Interacts with tubulin-related protein FtsZ.

Its subcellular location is the cytoplasm. It is found in the nucleoid. In terms of biological role, plays a central role in chromosome condensation, segregation and cell cycle progression. Functions as a homodimer, which is essential for chromosome partition. Involved in negative DNA supercoiling in vivo, and by this means organize and compact chromosomes. May achieve or facilitate chromosome segregation by condensation DNA from both sides of a centrally located replisome during cell division. The chain is Chromosome partition protein MukB from Yersinia pestis bv. Antiqua (strain Antiqua).